Here is a 51-residue protein sequence, read N- to C-terminus: Large ribosomal subunit protein eL39 (51 aa).

The disordered stretch occupies residues 1 to 22 (MPSQKSFRTKQKLAKAQKQNRP).

It belongs to the eukaryotic ribosomal protein eL39 family. Interacts with YIH1.

This Debaryomyces hansenii (strain ATCC 36239 / CBS 767 / BCRC 21394 / JCM 1990 / NBRC 0083 / IGC 2968) (Yeast) protein is Large ribosomal subunit protein eL39 (RPL39).